A 153-amino-acid chain; its full sequence is ATP synthase subunit b' (153 aa).

A helical membrane pass occupies residues 23-40 (LMAIQVVALTYILNSLFF).

Belongs to the ATPase B chain family. As to quaternary structure, F-type ATPases have 2 components, F(1) - the catalytic core - and F(0) - the membrane proton channel. F(1) has five subunits: alpha(3), beta(3), gamma(1), delta(1), epsilon(1). F(0) has four main subunits: a(1), b(1), b'(1) and c(10-14). The alpha and beta chains form an alternating ring which encloses part of the gamma chain. F(1) is attached to F(0) by a central stalk formed by the gamma and epsilon chains, while a peripheral stalk is formed by the delta, b and b' chains.

The protein localises to the cellular thylakoid membrane. F(1)F(0) ATP synthase produces ATP from ADP in the presence of a proton or sodium gradient. F-type ATPases consist of two structural domains, F(1) containing the extramembraneous catalytic core and F(0) containing the membrane proton channel, linked together by a central stalk and a peripheral stalk. During catalysis, ATP synthesis in the catalytic domain of F(1) is coupled via a rotary mechanism of the central stalk subunits to proton translocation. Its function is as follows. Component of the F(0) channel, it forms part of the peripheral stalk, linking F(1) to F(0). The b'-subunit is a diverged and duplicated form of b found in plants and photosynthetic bacteria. This chain is ATP synthase subunit b', found in Prochlorococcus marinus (strain MIT 9312).